The primary structure comprises 158 residues: SUMO-conjugating enzyme UBC9 (158 aa).

The UBC core domain occupies 4 to 157; that stretch reads IALSRLAQER…VRAQAKKFSP (154 aa). Residues 13–18 form an interaction with sumo1 region; that stretch reads RKAWRK. C93 functions as the Glycyl thioester intermediate in the catalytic mechanism.

This sequence belongs to the ubiquitin-conjugating enzyme family. As to quaternary structure, forms a tight complex with RANGAP1 and RANBP2.

It localises to the nucleus. It participates in protein modification; protein sumoylation. In terms of biological role, accepts the ubiquitin-like proteins SUMO1, SUMO2 and SUMO3 from the UBLE1A-UBLE1B E1 complex and catalyzes their covalent attachment to other proteins with the help of an E3 ligase such as RANBP2 or CBX4. Essential for nuclear architecture and chromosome segregation. The chain is SUMO-conjugating enzyme UBC9 (ube2i) from Pagrus major (Red sea bream).